The following is a 281-amino-acid chain: MNIVNTIKDVRLIIKKWKDENLSIGYVPTMGYLHEGHASLIKKAREENDKVIVSIFVNPIQFGPKEDYSTYPRDLVKDSSLCEKFGVDLIFNPETSEMYPNKIYSHINVDILTENLCGEKRPGHFQGVCTVLTKFFNILNPTKAYLGEKDAQQLAVVRKMVEDLNFPIEIIGCPIIREEDGLAKSSRNAYLNKQERKSALILNKSLKEAQNALESGEKNSNNIRDIIVSKLNKEPLAKIDYVSIVDSITLQSVKKIQSSILVAIAVYIGKTRLIDNFTFKL.

30-37 is a binding site for ATP; the sequence is MGYLHEGH. The active-site Proton donor is His-37. Gln-61 provides a ligand contact to (R)-pantoate. Gln-61 contacts beta-alanine. 147 to 150 provides a ligand contact to ATP; sequence GEKD. Gln-153 serves as a coordination point for (R)-pantoate. ATP contacts are provided by residues Ile-176 and 184-187; that span reads KSSR.

This sequence belongs to the pantothenate synthetase family. As to quaternary structure, homodimer.

It localises to the cytoplasm. It catalyses the reaction (R)-pantoate + beta-alanine + ATP = (R)-pantothenate + AMP + diphosphate + H(+). Its pathway is cofactor biosynthesis; (R)-pantothenate biosynthesis; (R)-pantothenate from (R)-pantoate and beta-alanine: step 1/1. Catalyzes the condensation of pantoate with beta-alanine in an ATP-dependent reaction via a pantoyl-adenylate intermediate. In Clostridium botulinum (strain Langeland / NCTC 10281 / Type F), this protein is Pantothenate synthetase.